Here is a 1640-residue protein sequence, read N- to C-terminus: RING finger protein 17 (1640 aa).

An RING-type zinc finger spans residues 30–73 (CTRCGRKVSVASGDHHKFPCGHAFCELCLLAPQEYTTSKCTDCE). At serine 134 the chain carries Phosphoserine. Residue lysine 229 is modified to N6-acetyllysine. 2 disordered regions span residues 348–376 (TDET…TKEM) and 413–435 (DDPI…APVG). The span at 360–373 (APDRHLEGKKKQPT) shows a compositional bias: basic and acidic residues. Tudor domains lie at 751–809 (CPLQ…FLEP) and 985–1044 (KWEC…LKTM). Basic and acidic residues predominate over residues 1170 to 1184 (NEHKVPDSKGKKSES). Positions 1170-1191 (NEHKVPDSKGKKSESRSTGCYR) are disordered. Tudor domains follow at residues 1246–1303 (SWKK…PDTP) and 1496–1556 (DFSS…LMQY).

In terms of assembly, interacts with MXD1, MXD3, MXD4, MXI1 and PIWIL1. Self-associates. Expressed at high levels in adult testis. Expressed in male germ cells (at protein level). Expressed at lower levels in adult thyroid, submaxillary gland, ovary and epididymis.

It is found in the cytoplasm. The protein localises to the nucleus. Functionally, seems to be involved in regulation of transcriptional activity of MYC. In vitro, inhibits DNA-binding activity of Mad-MAX heterodimers. Can recruit Mad transcriptional repressors (MXD1, MXD3, MXD4 and MXI1) to the cytoplasm. May be involved in spermiogenesis. This is RING finger protein 17 (Rnf17) from Mus musculus (Mouse).